Here is a 124-residue protein sequence, read N- to C-terminus: Large ribosomal subunit protein bL12 (124 aa).

This sequence belongs to the bacterial ribosomal protein bL12 family. Homodimer. Part of the ribosomal stalk of the 50S ribosomal subunit. Forms a multimeric L10(L12)X complex, where L10 forms an elongated spine to which 2 to 4 L12 dimers bind in a sequential fashion. Binds GTP-bound translation factors.

In terms of biological role, forms part of the ribosomal stalk which helps the ribosome interact with GTP-bound translation factors. Is thus essential for accurate translation. The polypeptide is Large ribosomal subunit protein bL12 (Allorhizobium ampelinum (strain ATCC BAA-846 / DSM 112012 / S4) (Agrobacterium vitis (strain S4))).